A 644-amino-acid chain; its full sequence is DNA mismatch repair protein MutL (644 aa).

Belongs to the DNA mismatch repair MutL/HexB family.

Its function is as follows. This protein is involved in the repair of mismatches in DNA. It is required for dam-dependent methyl-directed DNA mismatch repair. May act as a 'molecular matchmaker', a protein that promotes the formation of a stable complex between two or more DNA-binding proteins in an ATP-dependent manner without itself being part of a final effector complex. This chain is DNA mismatch repair protein MutL, found in Chlorobium chlorochromatii (strain CaD3).